Consider the following 1462-residue polypeptide: DNA topoisomerase 2 (1462 aa).

ATP contacts are provided by residues N79, N108, 136 to 138 (SSN), and 149 to 156 (GRNGYGAK). The tract at residues 332–334 (NKK) is interaction with DNA. An ATP-binding site is contributed by 365-367 (QTK). The Toprim domain occupies 442 to 556 (CTLILTEGDS…SLLKVPSFLV (115 aa)). 3 residues coordinate Mg(2+): E448, D525, and D527. Positions 671–1131 (KDFVNKELIL…PTTSLWLKDL (461 aa)) constitute a Topo IIA-type catalytic domain. Y761 acts as the O-(5'-phospho-DNA)-tyrosine intermediate in catalysis. Residues 947–956 (KLTSTISTSN) are interaction with DNA. 2 disordered regions span residues 1040-1077 (PMPR…SVSV) and 1147-1462 (EDDR…EDDD). The segment covering 1056–1068 (NDDDSEEQEDAEP) has biased composition (acidic residues). Residues 1167–1181 (PAKKPPQPRKNTKKA) show a composition bias toward basic residues. Over residues 1198-1207 (AVEAAKPAEV) the composition is skewed to low complexity. Positions 1240-1250 (IESSGEKSQAM) are enriched in polar residues. Residues 1260–1275 (AGKKQNNKRGGAKKKS) show a composition bias toward basic residues. Over residues 1282–1300 (SDSDNEVNDVDDDDDDFEE) the composition is skewed to acidic residues. Composition is skewed to low complexity over residues 1314 to 1334 (KPAA…APAA) and 1419 to 1430 (APQPARARPQRA). Positions 1442 to 1462 (SESEEDSDEDAELSDFEEDDD) are enriched in acidic residues.

The protein belongs to the type II topoisomerase family. In terms of assembly, homodimer. Mg(2+) is required as a cofactor. It depends on Mn(2+) as a cofactor. The cofactor is Ca(2+). In terms of tissue distribution, abundant in proliferative tissues.

The enzyme catalyses ATP-dependent breakage, passage and rejoining of double-stranded DNA.. Control of topological states of DNA by transient breakage and subsequent rejoining of DNA strands. Topoisomerase II makes double-strand breaks. The protein is DNA topoisomerase 2 (TOP2) of Pisum sativum (Garden pea).